The primary structure comprises 173 residues: Large ribosomal subunit protein bL17 (173 aa).

Residues 136–173 (AEEEAPAVEAEATEATEAPVEEAAAVEAEAPADAEKAE) are disordered. Over residues 138–149 (EEAPAVEAEATE) the composition is skewed to acidic residues. Residues 150-166 (ATEAPVEEAAAVEAEAP) show a composition bias toward low complexity.

The protein belongs to the bacterial ribosomal protein bL17 family. Part of the 50S ribosomal subunit. Contacts protein L32.

In Bifidobacterium longum subsp. infantis (strain ATCC 15697 / DSM 20088 / JCM 1222 / NCTC 11817 / S12), this protein is Large ribosomal subunit protein bL17.